The following is a 335-amino-acid chain: Pyruvate dehydrogenase E1 component subunit beta (335 aa).

Glutamate 60 is a binding site for thiamine diphosphate. Positions 161, 162, and 166 each coordinate K(+).

In terms of assembly, heterodimer of an alpha and a beta chain. Thiamine diphosphate is required as a cofactor.

The protein resides in the plastid. It is found in the chloroplast. It catalyses the reaction N(6)-[(R)-lipoyl]-L-lysyl-[protein] + pyruvate + H(+) = N(6)-[(R)-S(8)-acetyldihydrolipoyl]-L-lysyl-[protein] + CO2. Its function is as follows. The pyruvate dehydrogenase complex catalyzes the overall conversion of pyruvate to acetyl-CoA and CO(2). It contains multiple copies of three enzymatic components: pyruvate dehydrogenase (E1), dihydrolipoamide acetyltransferase (E2) and lipoamide dehydrogenase (E3). In Chlorokybus atmophyticus (Soil alga), this protein is Pyruvate dehydrogenase E1 component subunit beta (pdhB).